We begin with the raw amino-acid sequence, 440 residues long: Sialyltransferase-like protein 2 (440 aa).

Residues 1–5 (MKLLH) lie on the Cytoplasmic side of the membrane. The helical; Signal-anchor for type II membrane protein transmembrane segment at 6–26 (LIFLLALTTGISAVLIYIIGV) threads the bilayer. Over 27–440 (SNLYESNRFT…HGQLCITPAD (414 aa)) the chain is Lumenal. N-linked (GlcNAc...) asparagine glycans are attached at residues Asn113 and Asn149.

This sequence belongs to the glycosyltransferase 29 family.

It is found in the golgi apparatus membrane. May be involved in the transfer of 2-keto-3-deoxy-D-lyxo-heptulosaric acid (Dha) and/or 2-keto-3-deoxy-D-manno-octulosonic acid (Kdo) on the homogalacturonan backbone of rhamnogalacturonan-II. Required for efficient pollen grain germination and pollen tube elongation. Does not possess sialyltransferase activity in vitro. This is Sialyltransferase-like protein 2 from Arabidopsis thaliana (Mouse-ear cress).